The following is a 212-amino-acid chain: Putative 3-methyladenine DNA glycosylase (212 aa).

The protein belongs to the DNA glycosylase MPG family.

This Nocardia farcinica (strain IFM 10152) protein is Putative 3-methyladenine DNA glycosylase.